We begin with the raw amino-acid sequence, 751 residues long: Disintegrin and metalloproteinase domain-containing protein 2 (751 aa).

The signal sequence occupies residues 1-16; the sequence is MLRVLFLLCGLSGLRT. The propeptide occupies 17 to 173; sequence KENSERLHVQ…PYKVQSVQPR (157 aa). The Extracellular portion of the chain corresponds to 17–702; the sequence is KENSERLHVQ…DVYQTAKPTR (686 aa). N-linked (GlcNAc...) asparagine glycosylation is found at asparagine 122, asparagine 147, asparagine 219, and asparagine 289. A Peptidase M12B domain is found at 177 to 374; it reads QYIEMHVVVE…QKSQCLQNLP (198 aa). 3 disulfide bridges follow: cysteine 286-cysteine 369, cysteine 328-cysteine 353, and cysteine 330-cysteine 335. Residues asparagine 352, asparagine 434, asparagine 458, asparagine 559, and asparagine 566 are each glycosylated (N-linked (GlcNAc...) asparagine). The Disintegrin domain maps to 383 to 472; it reads DAVCGNSIVE…LCPDDIVIQN (90 aa). Cysteine 444 and cysteine 464 are joined by a disulfide. Residues 612–645 enclose the EGF-like domain; sequence VNLGCTLQNCNNQGICNSLQHCHCNPTFLPPNCS. Cystine bridges form between cysteine 616/cysteine 627, cysteine 621/cysteine 633, and cysteine 635/cysteine 644. A glycan (N-linked (GlcNAc...) asparagine) is linked at asparagine 643. The chain crosses the membrane as a helical span at residues 703 to 723; the sequence is WPFFLLIPFFIILGALIAILV. Topologically, residues 724–751 are cytoplasmic; it reads KVQFQRKKWKTEDYTSDEQFESDSELKE. The residue at position 745 (serine 745) is a Phosphoserine.

Heterodimer with ADAM1/fertilin subunit alpha. Post-translationally, the signal and the metalloprotease domain are cleaved during the epididymal maturation of the spermatozoa. As to expression, expressed specifically in testis.

The protein resides in the membrane. Functionally, sperm surface membrane protein that may be involved in sperm-egg plasma membrane adhesion and fusion during fertilization. Could have a direct role in sperm-zona binding or migration of sperm from the uterus into the oviduct. Interactions with egg membrane could be mediated via binding between its disintegrin-like domain to one or more integrins receptors on the egg. This is a non catalytic metalloprotease-like protein. The chain is Disintegrin and metalloproteinase domain-containing protein 2 (ADAM2) from Oryctolagus cuniculus (Rabbit).